Here is a 169-residue protein sequence, read N- to C-terminus: Ribosome maturation factor RimM (169 aa).

In terms of domain architecture, PRC barrel spans 97-169 (NDEAYFTDLI…KIVVDWEYDY (73 aa)).

This sequence belongs to the RimM family. In terms of assembly, binds ribosomal protein uS19.

The protein localises to the cytoplasm. In terms of biological role, an accessory protein needed during the final step in the assembly of 30S ribosomal subunit, possibly for assembly of the head region. Essential for efficient processing of 16S rRNA. May be needed both before and after RbfA during the maturation of 16S rRNA. It has affinity for free ribosomal 30S subunits but not for 70S ribosomes. This chain is Ribosome maturation factor RimM, found in Francisella philomiragia subsp. philomiragia (strain ATCC 25017 / CCUG 19701 / FSC 153 / O#319-036).